A 536-amino-acid polypeptide reads, in one-letter code: Zinc finger protein 394 (536 aa).

The tract at residues 18–45 (AVKVEEDSPGSQEPSGSGDWQNPETSRK) is disordered. Lys-20 participates in a covalent cross-link: Glycyl lysine isopeptide (Lys-Gly) (interchain with G-Cter in SUMO2). Residues 26–41 (PGSQEPSGSGDWQNPE) are compositionally biased toward polar residues. The 83-residue stretch at 44-126 (RKQFRQLRYQ…ALARTLQRAL (83 aa)) folds into the SCAN box domain. The KRAB domain maps to 135–196 (ATFKDVAESL…KQEMSKEAES (62 aa)). Residues Lys-207 and Lys-260 each participate in a glycyl lysine isopeptide (Lys-Gly) (interchain with G-Cter in SUMO2) cross-link. C2H2-type zinc fingers lie at residues 328 to 350 (YKCDNCEKRFRQRSDLFKHQRTH), 356 to 378 (YQCQECGKSFSQSAALVKHQRTH), and 384 to 406 (YACPECGECFRQSSHLSRHQRTH). The segment at 412-433 (CKCEECGEIFHISSLFKHQRLH) adopts a C2H2-type 4; atypical zinc-finger fold. A Glycyl lysine isopeptide (Lys-Gly) (interchain with G-Cter in SUMO2) cross-link involves residue Lys-413. C2H2-type zinc fingers lie at residues 439 to 461 (HKCEVCEKSFKQRSDLFKHQRIH), 467 to 489 (YMCFVCERRFSQSATLIKHQRTH), and 495 to 517 (YKCFQCGERFRQSTHLVRHQRIH).

This sequence belongs to the krueppel C2H2-type zinc-finger protein family.

The protein resides in the nucleus. May be involved in transcriptional regulation. This chain is Zinc finger protein 394 (Znf394), found in Rattus norvegicus (Rat).